Reading from the N-terminus, the 610-residue chain is UvrABC system protein C (610 aa).

Positions 16-94 (SQPGVYRMYD…IKLYQPRYNV (79 aa)) constitute a GIY-YIG domain. Positions 204 to 239 (QQVLTQLITRMEEASQQLHFEDAARIRDQIQAVRRV) constitute a UVR domain.

This sequence belongs to the UvrC family. As to quaternary structure, interacts with UvrB in an incision complex.

It localises to the cytoplasm. The UvrABC repair system catalyzes the recognition and processing of DNA lesions. UvrC both incises the 5' and 3' sides of the lesion. The N-terminal half is responsible for the 3' incision and the C-terminal half is responsible for the 5' incision. The polypeptide is UvrABC system protein C (Yersinia pseudotuberculosis serotype O:1b (strain IP 31758)).